The sequence spans 451 residues: Exodeoxyribonuclease 7 large subunit (451 aa).

This sequence belongs to the XseA family. As to quaternary structure, heterooligomer composed of large and small subunits.

The protein resides in the cytoplasm. It carries out the reaction Exonucleolytic cleavage in either 5'- to 3'- or 3'- to 5'-direction to yield nucleoside 5'-phosphates.. Its function is as follows. Bidirectionally degrades single-stranded DNA into large acid-insoluble oligonucleotides, which are then degraded further into small acid-soluble oligonucleotides. In Neisseria meningitidis serogroup A / serotype 4A (strain DSM 15465 / Z2491), this protein is Exodeoxyribonuclease 7 large subunit.